The following is a 72-amino-acid chain: Large ribosomal subunit protein bL31 (72 aa).

Zn(2+) contacts are provided by C16, C18, C37, and C40.

The protein belongs to the bacterial ribosomal protein bL31 family. Type A subfamily. As to quaternary structure, part of the 50S ribosomal subunit. It depends on Zn(2+) as a cofactor.

Functionally, binds the 23S rRNA. This is Large ribosomal subunit protein bL31 from Hahella chejuensis (strain KCTC 2396).